A 246-amino-acid polypeptide reads, in one-letter code: Protein crossbronx (246 aa).

Residues Gln-20 to Ala-177 form the UBC core domain.

It belongs to the ubiquitin-conjugating enzyme family. FTS subfamily.

This chain is Protein crossbronx (cbx), found in Drosophila grimshawi (Hawaiian fruit fly).